The chain runs to 387 residues: Phosphoglycerate kinase (387 aa).

Substrate-binding positions include 21 to 23, Arg36, 59 to 62, Arg113, and Arg146; these read DLN and HLGR. Residues Lys197, Glu314, and 340-343 contribute to the ATP site; that span reads GGDT.

Belongs to the phosphoglycerate kinase family. Monomer.

It is found in the cytoplasm. The catalysed reaction is (2R)-3-phosphoglycerate + ATP = (2R)-3-phospho-glyceroyl phosphate + ADP. It functions in the pathway carbohydrate degradation; glycolysis; pyruvate from D-glyceraldehyde 3-phosphate: step 2/5. The sequence is that of Phosphoglycerate kinase from Photorhabdus luminescens (Xenorhabdus luminescens).